The sequence spans 72 residues: Translation initiation factor IF-1 (72 aa).

Residues 1–72 (MSKEDVIEVE…TRGRITWRKK (72 aa)) form the S1-like domain.

It belongs to the IF-1 family. In terms of assembly, component of the 30S ribosomal translation pre-initiation complex which assembles on the 30S ribosome in the order IF-2 and IF-3, IF-1 and N-formylmethionyl-tRNA(fMet); mRNA recruitment can occur at any time during PIC assembly.

The protein resides in the cytoplasm. Functionally, one of the essential components for the initiation of protein synthesis. Stabilizes the binding of IF-2 and IF-3 on the 30S subunit to which N-formylmethionyl-tRNA(fMet) subsequently binds. Helps modulate mRNA selection, yielding the 30S pre-initiation complex (PIC). Upon addition of the 50S ribosomal subunit IF-1, IF-2 and IF-3 are released leaving the mature 70S translation initiation complex. This Alkaliphilus metalliredigens (strain QYMF) protein is Translation initiation factor IF-1.